The primary structure comprises 311 residues: Aspartate carbamoyltransferase catalytic subunit (311 aa).

Residues R55 and T56 each contribute to the carbamoyl phosphate site. K85 contributes to the L-aspartate binding site. 3 residues coordinate carbamoyl phosphate: R106, H135, and Q138. Residues R168 and R230 each contribute to the L-aspartate site. Carbamoyl phosphate-binding residues include L268 and P269.

It belongs to the aspartate/ornithine carbamoyltransferase superfamily. ATCase family. In terms of assembly, heterododecamer (2C3:3R2) of six catalytic PyrB chains organized as two trimers (C3), and six regulatory PyrI chains organized as three dimers (R2).

The catalysed reaction is carbamoyl phosphate + L-aspartate = N-carbamoyl-L-aspartate + phosphate + H(+). It functions in the pathway pyrimidine metabolism; UMP biosynthesis via de novo pathway; (S)-dihydroorotate from bicarbonate: step 2/3. Catalyzes the condensation of carbamoyl phosphate and aspartate to form carbamoyl aspartate and inorganic phosphate, the committed step in the de novo pyrimidine nucleotide biosynthesis pathway. The polypeptide is Aspartate carbamoyltransferase catalytic subunit (Salmonella paratyphi A (strain AKU_12601)).